An 87-amino-acid chain; its full sequence is U14-lycotoxin-Ls1b (87 aa).

The signal sequence occupies residues 1–20 (MNSKVFVVLLLLALSTCVLS). Positions 21–66 (EKYCPTPRNTSCKKMNIRNNCCRDSDCTSNAFCCAEPCGNFCHKAS) constitute a WAP domain. 5 disulfides stabilise this stretch: Cys-24/Cys-54, Cys-32/Cys-58, Cys-41/Cys-53, Cys-42/Cys-80, and Cys-47/Cys-62.

Belongs to the venom protein 11 family. 01 (wap-1) subfamily. Contains 5 disulfide bonds. In terms of tissue distribution, expressed by the venom gland.

The protein resides in the secreted. Has antibacterial activity. The protein is U14-lycotoxin-Ls1b of Lycosa singoriensis (Wolf spider).